We begin with the raw amino-acid sequence, 452 residues long: UPF0210 protein Dred_1672 (452 aa).

It belongs to the UPF0210 family. As to quaternary structure, homodimer.

The protein is UPF0210 protein Dred_1672 of Desulforamulus reducens (strain ATCC BAA-1160 / DSM 100696 / MI-1) (Desulfotomaculum reducens).